The primary structure comprises 93 residues: Sec-independent protein translocase protein TatA (93 aa).

The chain crosses the membrane as a helical span at residues 1–21; that stretch reads MGAMSPWHWAIVALVVVILFG. Residues 44–93 form a disordered region; it reads KEMQNDNSTPAPTAQQSAPAELPVADTTTAPVTPPAPVQPQPQHTEPKSA. Positions 51–74 are enriched in low complexity; the sequence is STPAPTAQQSAPAELPVADTTTAP.

The protein belongs to the TatA/E family. The Tat system comprises two distinct complexes: a TatABC complex, containing multiple copies of TatA, TatB and TatC subunits, and a separate TatA complex, containing only TatA subunits. Substrates initially bind to the TatABC complex, which probably triggers association of the separate TatA complex to form the active translocon.

It is found in the cell membrane. Its function is as follows. Part of the twin-arginine translocation (Tat) system that transports large folded proteins containing a characteristic twin-arginine motif in their signal peptide across membranes. TatA could form the protein-conducting channel of the Tat system. The chain is Sec-independent protein translocase protein TatA from Rhodococcus opacus (strain B4).